The primary structure comprises 390 residues: 8-amino-7-oxononanoate synthase (390 aa).

Arg-19 contributes to the substrate binding site. 106–107 is a pyridoxal 5'-phosphate binding site; sequence GY. His-131 contacts substrate. 3 residues coordinate pyridoxal 5'-phosphate: Ser-176, His-204, and Thr-233. N6-(pyridoxal phosphate)lysine is present on Lys-236. Substrate is bound at residue Thr-350.

This sequence belongs to the class-II pyridoxal-phosphate-dependent aminotransferase family. BioF subfamily. As to quaternary structure, homodimer. The cofactor is pyridoxal 5'-phosphate.

It catalyses the reaction 6-carboxyhexanoyl-[ACP] + L-alanine + H(+) = (8S)-8-amino-7-oxononanoate + holo-[ACP] + CO2. Its pathway is cofactor biosynthesis; biotin biosynthesis. In terms of biological role, catalyzes the decarboxylative condensation of pimeloyl-[acyl-carrier protein] and L-alanine to produce 8-amino-7-oxononanoate (AON), [acyl-carrier protein], and carbon dioxide. The polypeptide is 8-amino-7-oxononanoate synthase (Pseudomonas putida (strain ATCC 47054 / DSM 6125 / CFBP 8728 / NCIMB 11950 / KT2440)).